The chain runs to 31 residues: Potassium channel toxin alpha-KTx 19.2 (31 aa).

3 disulfide bridges follow: cysteine 3–cysteine 22, cysteine 8–cysteine 27, and cysteine 12–cysteine 29.

This sequence belongs to the short scorpion toxin superfamily. Potassium channel inhibitor family. Alpha-KTx 19 subfamily. In terms of assembly, monomer. In terms of tissue distribution, expressed by the venom gland.

It is found in the secreted. Its function is as follows. Blocks voltage-gated potassium channels rKv1.1/KCNA1, rKv1.2/KCNA2, hKv1.3/KCNA3, rKv1.6/KCNA6 (IC(50)=75.9 nM) and, to a lesser extent, Shaker IR (with the inactivation domain removed). The chain is Potassium channel toxin alpha-KTx 19.2 from Buthus occitanus tunetanus (Common European scorpion).